The sequence spans 23 residues: Phallacidin proprotein 1 (23 aa).

Proline 1 is a propeptide. The segment at residues 2–8 (AWLVDCP) is a cross-link (cyclopeptide (Ala-Pro)). Residues 3-7 (WLVDC) constitute a cross-link (2'-cysteinyl-6'-hydroxytryptophan sulfoxide (Trp-Cys)). Residues 9 to 23 (CVGDDVNRLLTRGER) constitute a propeptide that is removed on maturation.

The protein belongs to the MSDIN fungal toxin family. Processed by the macrocyclase-peptidase enzyme POPB to yield a toxic cyclic heptapeptide. POPB first removes 10 residues from the N-terminus. Conformational trapping of the remaining peptide forces the enzyme to release this intermediate rather than proceed to macrocyclization. The enzyme rebinds the remaining peptide in a different conformation and catalyzes macrocyclization of the N-terminal 7 residues.

Functionally, toxin that belongs to the bicyclic heptapeptides called phallotoxins. Although structurally related to amatoxins, phallotoxins have a different mode of action, which is the stabilization of F-actin. Phallotoxins are poisonous when administered parenterally, but not orally because of poor absorption. The polypeptide is Phallacidin proprotein 1 (Amanita exitialis (Guangzhou destroying angel)).